Here is a 192-residue protein sequence, read N- to C-terminus: MKNKVVVVTGVPGVGGTTVTQKAMDILSEEGLNYKMVNFGSAMFDVANEEGLASDRDQMRRLDPETQKRIQKMAGRKIAEMAKESPVAVDTHSTVKTPKGYLPGLPAWVLTELNPDIVIVVETDGDEILMRRLSDESRKRDLETTASIEEHQFMNRAAAMSYGVLTGATVKIVKNKNGLVDNAVEELMSVLR.

10-18 (GVPGVGGTT) is a binding site for ATP.

This sequence belongs to the archaeal adenylate kinase family. Monomer.

It localises to the cytoplasm. It carries out the reaction AMP + ATP = 2 ADP. This chain is Adenylate kinase, found in Methanococcus maripaludis (strain DSM 14266 / JCM 13030 / NBRC 101832 / S2 / LL).